A 689-amino-acid polypeptide reads, in one-letter code: Elongation factor G (689 aa).

The 275-residue stretch at alanine 9 to leucine 283 folds into the tr-type G domain. GTP is bound by residues alanine 18–threonine 25, aspartate 82–histidine 86, and asparagine 136–aspartate 139.

It belongs to the TRAFAC class translation factor GTPase superfamily. Classic translation factor GTPase family. EF-G/EF-2 subfamily.

The protein resides in the cytoplasm. In terms of biological role, catalyzes the GTP-dependent ribosomal translocation step during translation elongation. During this step, the ribosome changes from the pre-translocational (PRE) to the post-translocational (POST) state as the newly formed A-site-bound peptidyl-tRNA and P-site-bound deacylated tRNA move to the P and E sites, respectively. Catalyzes the coordinated movement of the two tRNA molecules, the mRNA and conformational changes in the ribosome. The polypeptide is Elongation factor G (Clostridium botulinum (strain ATCC 19397 / Type A)).